Reading from the N-terminus, the 623-residue chain is Chaperone protein DnaK (623 aa).

The residue at position 175 (threonine 175) is a Phosphothreonine; by autocatalysis. Residues 578-623 form a disordered region; sequence ANPEGAPGAGFDPNNMGGANAGNASAGNDKKDDNVVDADFKVEDDK. The span at 591-604 shows a compositional bias: low complexity; it reads NNMGGANAGNASAG. Over residues 605-623 the composition is skewed to basic and acidic residues; it reads NDKKDDNVVDADFKVEDDK.

It belongs to the heat shock protein 70 family.

Functionally, acts as a chaperone. The chain is Chaperone protein DnaK from Clostridium botulinum (strain 657 / Type Ba4).